The sequence spans 351 residues: N-acetyl-gamma-glutamyl-phosphate reductase (351 aa).

Cys154 is an active-site residue.

This sequence belongs to the NAGSA dehydrogenase family. Type 1 subfamily.

Its subcellular location is the cytoplasm. It catalyses the reaction N-acetyl-L-glutamate 5-semialdehyde + phosphate + NADP(+) = N-acetyl-L-glutamyl 5-phosphate + NADPH + H(+). It functions in the pathway amino-acid biosynthesis; L-arginine biosynthesis; N(2)-acetyl-L-ornithine from L-glutamate: step 3/4. Functionally, catalyzes the NADPH-dependent reduction of N-acetyl-5-glutamyl phosphate to yield N-acetyl-L-glutamate 5-semialdehyde. The polypeptide is N-acetyl-gamma-glutamyl-phosphate reductase (Synechocystis sp. (strain ATCC 27184 / PCC 6803 / Kazusa)).